The sequence spans 476 residues: Riboflavin transporter rft-2 (476 aa).

Residues 1 to 21 form a helical membrane-spanning segment; it reads MGCSAATFILVALFGSSSWMG. Over 22–41 the chain is Cytoplasmic; sequence TNSVWMQLPLLTSELPEQWN. Residues 42 to 62 traverse the membrane as a helical segment; it reads LPSYLAGVVQIACIVPLIYTI. The Extracellular segment spans residues 63–75; that stretch reads LHKGVKSFTIPTA. Residues 76–96 traverse the membrane as a helical segment; the sequence is PLIIALLSLACCCQLGLSFFW. At 97–113 the chain is on the cytoplasmic side; it reads SDYSEIFGAPRSWPLYS. Residues 114-134 traverse the membrane as a helical segment; the sequence is LLFGLAIVNAMSNVLFMPFMA. Topologically, residues 135-140 are extracellular; the sequence is QFHPAY. Residues 141–161 form a helical membrane-spanning segment; the sequence is LNAYFVGMGLSSLAPSLLSLA. Residues 162-185 lie on the Cytoplasmic side of the membrane; that stretch reads QGTSMFKCDEKGVAERFPPNFSVS. The chain crosses the membrane as a helical span at residues 186–206; it reads IFFFVIFSFTCVALFAFIALY. The Extracellular segment spans residues 207–306; it reads RSGAHTHFAT…HPVDYITGVK (100 aa). A disordered region spans residues 215 to 249; the sequence is ATPNKKEPNEGTPLKKDLNNTSSSRKGDDEDESPI. The segment covering 218 to 232 has biased composition (basic and acidic residues); it reads NKKEPNEGTPLKKDL. An N-linked (GlcNAc...) asparagine glycan is attached at asparagine 233. A helical membrane pass occupies residues 307-327; it reads FTFLLFTTALVNAQMNGIITS. The Cytoplasmic segment spans residues 328–342; that stretch reads VQSYAALPYSQATYH. Residues 343–363 traverse the membrane as a helical segment; sequence FAVTLSNVVSPLSSFLPFFIS. Topologically, residues 364-366 are extracellular; that stretch reads VRS. Residues 367-387 traverse the membrane as a helical segment; that stretch reads IPVLAILTACSTAMTAFIVYL. Residues 388-393 lie on the Cytoplasmic side of the membrane; it reads AALSPN. The chain crosses the membrane as a helical span at residues 394-414; it reads LIFNSVTIGSALSIGGSLIAA. Residues 415–437 are Extracellular-facing; sequence GLHSYLRVVFASLLREGHQSESR. A helical transmembrane segment spans residues 438 to 458; the sequence is LFWCGVFIQIGSFIGSAVMFP. Residues 459 to 476 are Cytoplasmic-facing; it reads LVNIAHLFTSAPQCKSIS.

This sequence belongs to the riboflavin transporter family. Expressed in intestine and pharynx.

The protein resides in the cell membrane. The catalysed reaction is riboflavin(in) = riboflavin(out). In terms of biological role, riboflavin transporter. The protein is Riboflavin transporter rft-2 of Caenorhabditis elegans.